The sequence spans 156 residues: Interleukin-36 receptor antagonist protein (156 aa).

Cys9 and Cys155 are joined by a disulfide.

It belongs to the IL-1 family. As to quaternary structure, interacts with cargo receptor TMED10; the interaction mediates the translocation from the cytoplasm into the ERGIC (endoplasmic reticulum-Golgi intermediate compartment) and thereby secretion. Post-translationally, removal of N-terminal methionine is necessary for full antagonistic activity. In terms of tissue distribution, highly abundant in embryonic tissue and tissues containing epithelial cells.

The protein resides in the cytoplasm. The protein localises to the secreted. Inhibits the activity of interleukin-36 (IL36A,IL36B and IL36G) by binding to receptor IL1RL2/IL-36R and preventing its association with the coreceptor IL1RAP for signaling. Part of the IL-36 signaling system that is thought to be present in epithelial barriers and to take part in local inflammatory response; similar to the IL-1 system with which it shares the coreceptor. Proposed to play a role in skin inflammation. May be involved in the innate immune response to fungal pathogens. May activate an anti-inflammatory signaling pathway by recruiting SIGIRR. This is Interleukin-36 receptor antagonist protein from Mus musculus (Mouse).